The chain runs to 299 residues: Glycine--tRNA ligase alpha subunit (299 aa).

This sequence belongs to the class-II aminoacyl-tRNA synthetase family. In terms of assembly, tetramer of two alpha and two beta subunits.

It is found in the cytoplasm. The catalysed reaction is tRNA(Gly) + glycine + ATP = glycyl-tRNA(Gly) + AMP + diphosphate. This Desulforapulum autotrophicum (strain ATCC 43914 / DSM 3382 / VKM B-1955 / HRM2) (Desulfobacterium autotrophicum) protein is Glycine--tRNA ligase alpha subunit.